Consider the following 470-residue polypeptide: Sorting nexin-17 (470 aa).

Residues 1–109 form the PX domain; sequence MHFSIPETES…SFLRRAQQET (109 aa). Positions 36, 38, 62, and 75 each coordinate a 1,2-diacyl-sn-glycero-3-phospho-(1D-myo-inositol-3-phosphate). Residues 115 to 206 form the Ras-associating domain; the sequence is EEVSLEVLLS…YKIVLRKSYW (92 aa). The tract at residues 115–432 is FERM-like; the sequence is EEVSLEVLLS…DASRESMVKL (318 aa). Residues 270–432 form a PTB-like F3 module region; the sequence is GYLRFDACVA…DASRESMVKL (163 aa). A phosphoserine mark is found at S336, S407, S409, S415, S421, S437, and S440. Residues 401 to 426 are disordered; sequence GGTLRRSDSQQAVKSPPLLESPDASR.

This sequence belongs to the sorting nexin family. As to quaternary structure, monomer. Interacts with APP (via cytoplasmic YXNPXY motif). Interacts with KIF1B. Interacts with the C-termini of P-selectin, PTC, LDLR, VLDLR, LRP1 and LRP8. Interacts with KRIT1 (via N-terminus). Interacts with HRAS. Interacts with ITGB1 and ITGB5 (via NPxY motif). Interacts with CCDC22 and CCDC93; the interaction associates SNX17 with the CCC complex. Interacts (via C-terminus) with VPS26C and VPS35L; the interactions are direct and associate SNX17 with the retriever complex. As to expression, detected in brain neurons (at protein level). Broadly expressed, with highest levels in brain and placenta, and lowest levels in colon, intestine and liver.

Its subcellular location is the cytoplasm. The protein localises to the early endosome. It is found in the cytoplasmic vesicle membrane. In terms of biological role, critical regulator of endosomal recycling of numerous surface proteins, including integrins, signaling receptor and channels. Binds to NPxY sequences in the cytoplasmic tails of target cargos. Associates with retriever and CCC complexes to prevent lysosomal degradation and promote cell surface recycling of numerous cargos such as integrins ITGB1, ITGB5 and their associated alpha subunits. Also required for maintenance of normal cell surface levels of APP and LRP1. Interacts with membranes containing phosphatidylinositol 3-phosphate (PtdIns(3P)). The protein is Sorting nexin-17 (Snx17) of Mus musculus (Mouse).